The chain runs to 214 residues: Ras-related protein RABH1c (214 aa).

A GTP-binding site is contributed by 16–23; the sequence is GDQSVGKT. An Effector region motif is present at residues 38 to 46; that stretch reads YQPTIGIDF. GTP contacts are provided by residues 64–68, 123–126, and 153–154; these read DTAGQ, NKTD, and SA. Residues 194–214 form a disordered region; the sequence is TSNSSQGEQQGGAGGGGGCSC. A compositionally biased stretch (gly residues) spans 202–214; it reads QQGGAGGGGGCSC. Residues Cys-212 and Cys-214 are each lipidated (S-geranylgeranyl cysteine). Cys-214 bears the Cysteine methyl ester mark.

Belongs to the small GTPase superfamily. Rab family. As to quaternary structure, interacts with the C-terminus of GC5, but not with GC3.

The protein resides in the golgi apparatus membrane. It is found in the cytoplasm. The protein localises to the cytosol. Functionally, protein transport. Regulator of membrane traffic from the Golgi apparatus towards the endoplasmic reticulum (ER). The chain is Ras-related protein RABH1c (RABH1C) from Arabidopsis thaliana (Mouse-ear cress).